A 459-amino-acid polypeptide reads, in one-letter code: Putrescine aminotransferase (459 aa).

Pyridoxal 5'-phosphate is bound by residues 150-151 (GT) and glutamine 274. Residue lysine 300 is modified to N6-(pyridoxal phosphate)lysine. Residue threonine 332 participates in pyridoxal 5'-phosphate binding.

This sequence belongs to the class-III pyridoxal-phosphate-dependent aminotransferase family. Putrescine aminotransferase subfamily. The cofactor is pyridoxal 5'-phosphate.

It catalyses the reaction an alkane-alpha,omega-diamine + 2-oxoglutarate = an omega-aminoaldehyde + L-glutamate. The catalysed reaction is putrescine + 2-oxoglutarate = 1-pyrroline + L-glutamate + H2O. The enzyme catalyses cadaverine + 2-oxoglutarate = 5-aminopentanal + L-glutamate. Its pathway is amine and polyamine degradation; putrescine degradation; 4-aminobutanal from putrescine (transaminase route): step 1/1. Catalyzes the aminotransferase reaction from putrescine to 2-oxoglutarate, leading to glutamate and 4-aminobutanal, which spontaneously cyclizes to form 1-pyrroline. This is the first step in one of two pathways for putrescine degradation, where putrescine is converted into 4-aminobutanoate (gamma-aminobutyrate or GABA) via 4-aminobutanal. Also functions as a cadaverine transaminase in a a L-lysine degradation pathway to succinate that proceeds via cadaverine, glutarate and L-2-hydroxyglutarate. This Escherichia coli O17:K52:H18 (strain UMN026 / ExPEC) protein is Putrescine aminotransferase.